The chain runs to 978 residues: Peroxisomal ATPase PEX6 (978 aa).

Arg119 carries the post-translational modification Omega-N-methylarginine. Residues 470–477 (GPPGSGKT) and 742–749 (GPPGTGKT) contribute to the ATP site.

This sequence belongs to the AAA ATPase family. Interacts with PEX1; forming the PEX1-PEX6 AAA ATPase complex, which is composed of a heterohexamer formed by a trimer of PEX1-PEX6 dimers. Interacts with PEX26; interaction is direct and promotes recruitment to peroxisomal membranes. Interacts with ZFAND6.

Its subcellular location is the cytoplasm. It is found in the cytosol. The protein localises to the peroxisome membrane. The protein resides in the cell projection. It localises to the cilium. Its subcellular location is the photoreceptor outer segment. The catalysed reaction is ATP + H2O = ADP + phosphate + H(+). Component of the PEX1-PEX6 AAA ATPase complex, a protein dislocase complex that mediates the ATP-dependent extraction of the PEX5 receptor from peroxisomal membranes, an essential step for PEX5 recycling. Specifically recognizes PEX5 monoubiquitinated at 'Cys-11', and pulls it out of the peroxisome lumen through the PEX2-PEX10-PEX12 retrotranslocation channel. Extraction by the PEX1-PEX6 AAA ATPase complex is accompanied by unfolding of the TPR repeats and release of bound cargo from PEX5. In Rattus norvegicus (Rat), this protein is Peroxisomal ATPase PEX6.